The chain runs to 340 residues: Cell division protein FtsQ (340 aa).

A disordered region spans residues 1 to 41 (MQGLNPFHRDQGAGGRPAPVRPAPARPAPVAPRTPRKDPAP). The Cytoplasmic segment spans residues 1 to 55 (MQGLNPFHRDQGAGGRPAPVRPAPARPAPVAPRTPRKDPAPSRLAYRLNRMMLRP). Over residues 19–32 (PVRPAPARPAPVAP) the composition is skewed to pro residues. Residues 56 to 78 (LVRRLVHVGLPAFLAALVAGIWL) traverse the membrane as a helical segment. Residues 79 to 340 (SDDTRRANLT…NAAKAKKKSG (262 aa)) lie on the Periplasmic side of the membrane. The POTRA domain occupies 104-172 (FMVKMMTIEG…GVLSAVVTER (69 aa)). The disordered stretch occupies residues 308 to 340 (RQARGQPELGPDGTPLAPEATAGNAAKAKKKSG). Positions 324–333 (APEATAGNAA) are enriched in low complexity.

It belongs to the FtsQ/DivIB family. FtsQ subfamily.

The protein resides in the cell inner membrane. Functionally, essential cell division protein. The chain is Cell division protein FtsQ from Paracoccus denitrificans (strain Pd 1222).